The chain runs to 458 residues: Serine protease HTRA2, mitochondrial (458 aa).

A mitochondrion-targeting transit peptide spans 1 to 31 (MAALRAGRGAGWSLRGWRALWGGRWGKGPLL). The propeptide occupies 32-133 (TPDLRALLTS…GGRGPPAVLA (102 aa)). A helical transmembrane segment spans residues 105-125 (VWLAVALGAGGAVLLLFWGGG). The IAP-binding motif signature appears at 134 to 137 (SVLG). Residues 166–342 (ILGRHPFSGR…IPSDRLREFL (177 aa)) are serine protease. Catalysis depends on charge relay system residues histidine 198, aspartate 228, and serine 306. Residues 364-445 (VMMLTLTPSI…QLAVRIRRGQ (82 aa)) enclose the PDZ domain.

This sequence belongs to the peptidase S1C family. As to quaternary structure, homotrimer. Interacts with MXI2. Interacts with THAP5 under apoptotic conditions. The mature protein, but not the precursor, binds to BIRC2/c-IAP1, BIRC3/c-IAP2 and XIAP/BIRC4. Interacts with BIRC6/bruce. Interacts with AREL1 (via HECT domain); in the cytoplasm following induction of apoptosis. In terms of processing, ubiquitinated by BIRC6; this activity is inhibited by DIABLO/SMAC. Autoproteolytically activated.

It is found in the mitochondrion intermembrane space. The protein resides in the mitochondrion membrane. It carries out the reaction Cleavage of non-polar aliphatic amino-acids at the P1 position, with a preference for Val, Ile and Met. At the P2 and P3 positions, Arg is selected most strongly with a secondary preference for other hydrophilic residues.. Inhibited by BIRC6. Serine protease that shows proteolytic activity against a non-specific substrate beta-casein. Promotes apoptosis by either relieving the inhibition of BIRC proteins on caspases, leading to an increase in caspase activity; or by a BIRC inhibition-independent, caspase-independent and serine protease activity-dependent mechanism. Cleaves BIRC6 and relieves its inhibition on CASP3, CASP7 and CASP9, but it is also prone to inhibition by BIRC6. Cleaves THAP5 and promotes its degradation during apoptosis. The chain is Serine protease HTRA2, mitochondrial (HTRA2) from Bos taurus (Bovine).